We begin with the raw amino-acid sequence, 393 residues long: NAD(P)H-quinone oxidoreductase subunit H, chloroplastic (393 aa).

It belongs to the complex I 49 kDa subunit family. In terms of assembly, NDH is composed of at least 16 different subunits, 5 of which are encoded in the nucleus.

The protein localises to the plastid. It is found in the chloroplast thylakoid membrane. It carries out the reaction a plastoquinone + NADH + (n+1) H(+)(in) = a plastoquinol + NAD(+) + n H(+)(out). The catalysed reaction is a plastoquinone + NADPH + (n+1) H(+)(in) = a plastoquinol + NADP(+) + n H(+)(out). In terms of biological role, NDH shuttles electrons from NAD(P)H:plastoquinone, via FMN and iron-sulfur (Fe-S) centers, to quinones in the photosynthetic chain and possibly in a chloroplast respiratory chain. The immediate electron acceptor for the enzyme in this species is believed to be plastoquinone. Couples the redox reaction to proton translocation, and thus conserves the redox energy in a proton gradient. The protein is NAD(P)H-quinone oxidoreductase subunit H, chloroplastic of Huperzia lucidula (Shining clubmoss).